A 610-amino-acid polypeptide reads, in one-letter code: ESX-5 secretion system protein EccA5 (610 aa).

357–364 (GPPGTGKT) provides a ligand contact to ATP.

The protein belongs to the CbxX/CfxQ family. Part of the ESX-5 / type VII secretion system (T7SS), which is composed of cytosolic and membrane components.

It is found in the cytoplasm. Functionally, part of an ESX-5 / type VII specialized secretion system (T7SS), which exports several proteins. EccA5 exhibits ATPase activity and may provide energy for the export of ESX-5 substrates. This chain is ESX-5 secretion system protein EccA5, found in Mycobacterium bovis (strain ATCC BAA-935 / AF2122/97).